Here is a 74-residue protein sequence, read N- to C-terminus: MNTAGRLLLLCLVLGLVFESLGIPVADDLEADRDTDPDEKDPSVHNYWRNVNCGGVPCKFGCCREDRCREIDCD.

The N-terminal stretch at 1 to 22 (MNTAGRLLLLCLVLGLVFESLG) is a signal peptide. Residues 23–49 (IPVADDLEADRDTDPDEKDPSVHNYWR) constitute a propeptide that is removed on maturation. Cystine bridges form between Cys53-Cys63, Cys58-Cys68, and Cys62-Cys73.

Expressed by the venom duct.

It localises to the secreted. Its function is as follows. Probable toxin with unknown function. Does not produce any changes in intracellular calcium levels in mouse dorsal root ganglion cells. In vivo, does not produce behavioral changes when intracranially injected into mice. The polypeptide is Conotoxin Vc7.2 (Conus victoriae (Queen Victoria cone)).